Reading from the N-terminus, the 249-residue chain is Serine 3-dehydrogenase (249 aa).

NADP(+) is bound at residue 6–30; the sequence is LITGATSGFGQATAQRFVKEGWKVI. Residue S135 coordinates substrate. Y148 serves as the catalytic Proton acceptor.

It belongs to the short-chain dehydrogenases/reductases (SDR) family. As to quaternary structure, homotetramer.

It catalyses the reaction L-serine + NADP(+) = aminoacetaldehyde + CO2 + NADPH. Its function is as follows. Catalyzes the oxidation of the hydroxyl group of serine to form 2-aminomalonate semialdehyde which is spontaneously converted into 2-aminoacetaldehyde and CO(2). Also acts on D-serine, L-glycerate, D-glycerate and 2-methyl-DL-serine. Does not act on O-methyl-DL-serine and L-threonine. This Rhizobium radiobacter (Agrobacterium tumefaciens) protein is Serine 3-dehydrogenase (sdh).